Consider the following 749-residue polypeptide: Cytosolic phospholipase A2 (749 aa).

The C2 domain occupies 1–124 (MASIDPYQHI…GEKKQVPFTF (124 aa)). The tract at residues 1 to 178 (MASIDPYQHI…LRKLLGPEKT (178 aa)) is phospholipid binding. Positions 40, 41, 43, 65, 93, 94, and 95 each coordinate Ca(2+). One can recognise a PLA2c domain in the interval 138–740 (VCSSTDLRFS…NDVEARKLLH (603 aa)). Serine 229 functions as the Nucleophile in the catalytic mechanism. The interval 417 to 458 (MEEEIENLKPKHILGNDSSDSDDEMQEPKGTENSKAEEEYQR) is disordered. Residues 442 to 457 (QEPKGTENSKAEEEYQ) are compositionally biased toward basic and acidic residues. The active-site Proton acceptor is aspartate 549.

It is found in the cytoplasm. The protein localises to the cytoplasmic vesicle. The enzyme catalyses a 1,2-diacyl-sn-glycero-3-phosphocholine + H2O = a 1-acyl-sn-glycero-3-phosphocholine + a fatty acid + H(+). The catalysed reaction is a 1-acyl-sn-glycero-3-phosphocholine + H2O = sn-glycerol 3-phosphocholine + a fatty acid + H(+). With respect to regulation, stimulated by agonists such as ATP, EGF, thrombin and bradykinin as well as by cytosolic Ca(2+). Functionally, selectively hydrolyzes arachidonyl phospholipids in the sn-2 position releasing arachidonic acid. Together with its lysophospholipid activity, it is implicated in the initiation of the inflammatory response. The protein is Cytosolic phospholipase A2 (pla2g4a) of Xenopus tropicalis (Western clawed frog).